The primary structure comprises 328 residues: Zinc transporter ZIP13 (328 aa).

Residues 1-7 (MPGCPCP) are Lumenal-facing. Residues 8–28 (GCGMAGPRLLFLTALALELLG) form a helical membrane-spanning segment. Residues 29–68 (RAGGSQPALRSRGTATACRLDNKESESWGALLSGERLDTW) are Cytoplasmic-facing. The chain crosses the membrane as a helical span at residues 69–89 (ICSLLGSLMVGLSGVFPLLVI). Residues 90 to 108 (PLEMGTMLRSEAGAWHLKQ) lie on the Lumenal side of the membrane. Residues 109–129 (LLSFALGGLLGNVFLHLLPEA) traverse the membrane as a helical segment. Residues 130–149 (WAYTCSASPGGEGQSLQQQQ) are Cytoplasmic-facing. Residues 150–170 (QLGLWVIAGILTFLALEKMFL) traverse the membrane as a helical segment. The Lumenal portion of the chain corresponds to 171 to 199 (DSKEEGTSQVSGYLNLLANTIDNFTHGLA). Residues 200-220 (VAASFLVSKKIGLLTTMAILL) traverse the membrane as a helical segment. The XEXPHE-motif motif lies at 221–226 (HEIPHE). At 221 to 242 (HEIPHEVGDFAILLRAGFDRWS) the chain is on the cytoplasmic side. A helical membrane pass occupies residues 243–263 (AAKLQLSTALGGLLGAGFAIC). Residues 264–273 (TQSPKGVEET) are Lumenal-facing. The chain crosses the membrane as a helical span at residues 274 to 294 (AAWVLPFTSGGFLYIALVNVL). At 295-306 (PDLLEEEDPWRS) the chain is on the cytoplasmic side. A helical membrane pass occupies residues 307–327 (LQQLLLLCAGIVVMVLFSLFV). Position 328 (aspartate 328) is a topological domain, lumenal.

It belongs to the ZIP transporter (TC 2.A.5) family. Homodimer.

The protein resides in the golgi apparatus membrane. It is found in the cytoplasmic vesicle membrane. Its subcellular location is the endoplasmic reticulum membrane. It carries out the reaction Zn(2+)(in) = Zn(2+)(out). Its function is as follows. Functions as a zinc transporter transporting Zn(2+) from the Golgi apparatus to the cytosol and thus influences the zinc level at least in areas of the cytosol. May regulate beige adipocyte differentiation. The protein is Zinc transporter ZIP13 of Pongo abelii (Sumatran orangutan).